The following is a 653-amino-acid chain: Fructose-1,6-bisphosphatase class 3 (653 aa).

Belongs to the FBPase class 3 family. It depends on Mn(2+) as a cofactor.

The catalysed reaction is beta-D-fructose 1,6-bisphosphate + H2O = beta-D-fructose 6-phosphate + phosphate. Its pathway is carbohydrate biosynthesis; gluconeogenesis. The protein is Fructose-1,6-bisphosphatase class 3 of Listeria monocytogenes serovar 1/2a (strain ATCC BAA-679 / EGD-e).